A 596-amino-acid chain; its full sequence is Elongation factor 4 (596 aa).

Residues 2 to 183 (KNIRNFSIIA…EIIRRIPAPN (182 aa)) enclose the tr-type G domain. Residues 14–19 (DHGKST) and 130–133 (NKID) each bind GTP.

It belongs to the TRAFAC class translation factor GTPase superfamily. Classic translation factor GTPase family. LepA subfamily.

The protein resides in the cell inner membrane. It carries out the reaction GTP + H2O = GDP + phosphate + H(+). In terms of biological role, required for accurate and efficient protein synthesis under certain stress conditions. May act as a fidelity factor of the translation reaction, by catalyzing a one-codon backward translocation of tRNAs on improperly translocated ribosomes. Back-translocation proceeds from a post-translocation (POST) complex to a pre-translocation (PRE) complex, thus giving elongation factor G a second chance to translocate the tRNAs correctly. Binds to ribosomes in a GTP-dependent manner. The chain is Elongation factor 4 from Wolinella succinogenes (strain ATCC 29543 / DSM 1740 / CCUG 13145 / JCM 31913 / LMG 7466 / NCTC 11488 / FDC 602W) (Vibrio succinogenes).